The following is a 444-amino-acid chain: UDP-N-acetylmuramate--L-alanine ligase (444 aa).

111 to 117 contacts ATP; it reads GAHGKTS.

This sequence belongs to the MurCDEF family.

It localises to the cytoplasm. The catalysed reaction is UDP-N-acetyl-alpha-D-muramate + L-alanine + ATP = UDP-N-acetyl-alpha-D-muramoyl-L-alanine + ADP + phosphate + H(+). Its pathway is cell wall biogenesis; peptidoglycan biosynthesis. In terms of biological role, cell wall formation. The chain is UDP-N-acetylmuramate--L-alanine ligase from Leuconostoc citreum (strain KM20).